The following is a 230-amino-acid chain: Uracil-DNA glycosylase (230 aa).

D70 serves as the catalytic Proton acceptor.

It belongs to the uracil-DNA glycosylase (UDG) superfamily. UNG family.

Its subcellular location is the cytoplasm. It catalyses the reaction Hydrolyzes single-stranded DNA or mismatched double-stranded DNA and polynucleotides, releasing free uracil.. Excises uracil residues from the DNA which can arise as a result of misincorporation of dUMP residues by DNA polymerase or due to deamination of cytosine. This is Uracil-DNA glycosylase from Pseudomonas syringae pv. syringae (strain B728a).